Reading from the N-terminus, the 68-residue chain is Guanine nucleotide-binding protein G(I)/G(S)/G(O) subunit gamma-10 (68 aa).

An N-acetylserine modification is found at Ser2. Cys65 is subject to Cysteine methyl ester. The S-geranylgeranyl cysteine moiety is linked to residue Cys65. Positions 66–68 are cleaved as a propeptide — removed in mature form; that stretch reads ALL.

It belongs to the G protein gamma family. As to quaternary structure, g proteins are composed of 3 units, alpha, beta and gamma. In terms of tissue distribution, abundantly and ubiquitously expressed.

The protein resides in the cell membrane. Guanine nucleotide-binding proteins (G proteins) are involved as a modulator or transducer in various transmembrane signaling systems. The beta and gamma chains are required for the GTPase activity, for replacement of GDP by GTP, and for G protein-effector interaction. Interacts with beta-1 and beta-2, but not with beta-3. The polypeptide is Guanine nucleotide-binding protein G(I)/G(S)/G(O) subunit gamma-10 (GNG10) (Homo sapiens (Human)).